Consider the following 92-residue polypeptide: Small ribosomal subunit protein uS19 (92 aa).

The protein belongs to the universal ribosomal protein uS19 family.

Functionally, protein S19 forms a complex with S13 that binds strongly to the 16S ribosomal RNA. The protein is Small ribosomal subunit protein uS19 of Magnetococcus marinus (strain ATCC BAA-1437 / JCM 17883 / MC-1).